We begin with the raw amino-acid sequence, 90 residues long: Barrier-to-autointegration factor-like protein (90 aa).

Belongs to the BAF family. In terms of assembly, homodimer. Heterodimerizes with BANF1. Expressed strongly in testis and pancreas. Also detected in brain, colon, liver, lung, ovary, placenta, prostate, small intestine, spleen and thymus. Not detected in heart, kidney and skeletal muscle.

It is found in the nucleus. It localises to the cytoplasm. Its function is as follows. May play a role in BANF1 regulation and influence tissue-specific roles of BANF1. The chain is Barrier-to-autointegration factor-like protein (BANF2) from Homo sapiens (Human).